The primary structure comprises 86 residues: Sec-independent protein translocase protein TatA (86 aa).

Residues 1–21 (MGGISIWQLLIIAVIVVLLFG) traverse the membrane as a helical segment. The tract at residues 42 to 86 (AIGDDNQPQQAQKTSSDADFETKNITEKQSVAQSETSESKNKEQV) is disordered. Polar residues-rich tracts occupy residues 47-58 (NQPQQAQKTSSD) and 68-77 (EKQSVAQSET).

Belongs to the TatA/E family. As to quaternary structure, the Tat system comprises two distinct complexes: a TatABC complex, containing multiple copies of TatA, TatB and TatC subunits, and a separate TatA complex, containing only TatA subunits. Substrates initially bind to the TatABC complex, which probably triggers association of the separate TatA complex to form the active translocon.

It is found in the cell inner membrane. Its function is as follows. Part of the twin-arginine translocation (Tat) system that transports large folded proteins containing a characteristic twin-arginine motif in their signal peptide across membranes. TatA could form the protein-conducting channel of the Tat system. The sequence is that of Sec-independent protein translocase protein TatA from Photorhabdus laumondii subsp. laumondii (strain DSM 15139 / CIP 105565 / TT01) (Photorhabdus luminescens subsp. laumondii).